Consider the following 160-residue polypeptide: Sperm protein associated with the nucleus on the X chromosome N2 (160 aa).

2 disordered regions span residues 1-48 (MEKP…TSEY) and 64-160 (SNQL…GEED). The segment covering 10–35 (GEKRKSPCDSNNRNDEMQETPNRDLA) has biased composition (basic and acidic residues). Residues 64–79 (SNQLENDQSQENSVNP) show a composition bias toward polar residues. Residues 81–97 (QEEEDEGSSQEDEDLDS) show a composition bias toward acidic residues. Positions 136–148 (SSERSSQEEKDPD) are enriched in basic and acidic residues.

It belongs to the SPAN-X family.

The sequence is that of Sperm protein associated with the nucleus on the X chromosome N2 (SPANXN2) from Pongo pygmaeus (Bornean orangutan).